We begin with the raw amino-acid sequence, 205 residues long: Hydrogenase-4 component A (205 aa).

4Fe-4S ferredoxin-type domains lie at 2-31 (NRFVVAEPLWCTGCNTCLAACSDVHKTQGL), 41-72 (KTSTITAPVVCHHCEEAPCLQVCPVNAISQRD), 73-102 (DAIQLNESLCIGCKLCAVVCPFGAISASGS), and 140-172 (QTVAVKCDLCDFLPEGPACVRACPNQALRLITG). Positions 12, 15, 18, 22, 51, 54, 59, 63, 82, 85, 88, 92, 146, 149, 158, and 162 each coordinate [4Fe-4S] cluster.

Requires [4Fe-4S] cluster as cofactor.

Functionally, probable electron transfer protein for hydrogenase 4. This Escherichia coli (strain K12) protein is Hydrogenase-4 component A.